A 1892-amino-acid polypeptide reads, in one-letter code: Plexin A3 (1892 aa).

The N-terminal stretch at 1 to 20 (MRSLWLLVFSFSVLTGTNMA) is a signal peptide. One can recognise a Sema domain in the interval 21 to 509 (FPMILSERPE…SDKQVSRLPV (489 aa)). The Extracellular segment spans residues 21–1240 (FPMILSERPE…IYSDSTLTLP (1220 aa)). Residue N68 is glycosylated (N-linked (GlcNAc...) asparagine). Intrachain disulfides connect C86–C95, C121–C129, C283–C404, C299–C355, C373–C392, C512–C529, C518–C560, C521–C538, and C532–C544. An N-linked (GlcNAc...) asparagine glycan is attached at N569. The cysteines at positions 595 and 615 are disulfide-linked. IPT/TIG domains follow at residues 861–955 (PRIT…YSFV), 957–1041 (PSFS…YIYT), 1044–1143 (PNIS…FTYY), and 1146–1232 (PTFE…LHIY). The N-linked (GlcNAc...) asparagine glycan is linked to N1183. The chain crosses the membrane as a helical span at residues 1241 to 1261 (AIIGIGAGGGVLLIAIIAVLI). Residues 1262 to 1315 (AYKRKTRDADRTLKRLQLQMDNLESRVALECKEAFAELQTDIQELTNDMDGVKI) adopt a coiled-coil conformation. The Cytoplasmic portion of the chain corresponds to 1262–1892 (AYKRKTRDAD…QAINLMSGSS (631 aa)).

This sequence belongs to the plexin family. In terms of tissue distribution, detected in primary motor neurons in the embryonic nervous system.

It localises to the cell membrane. Functionally, coreceptor for class 3 semaphorins. Necessary for signaling by class 3 semaphorins and subsequent remodeling of the cytoskeleton. Plays a role in axon guidance in the developing nervous system. Class 3 semaphorins bind to a complex composed of a neuropilin and a plexin. The plexin modulates the affinity of the complex for specific semaphorins, and its cytoplasmic domain is required for the activation of down-stream signaling events in the cytoplasm. This is Plexin A3 (plxna3) from Danio rerio (Zebrafish).